A 198-amino-acid chain; its full sequence is Segregation and condensation protein B (198 aa).

Residues 167–198 form a disordered region; that stretch reads PKLADPEADDPDQNEMDLFFDRFNQSKEQEEE. A compositionally biased stretch (acidic residues) spans 172-181; sequence PEADDPDQNE.

Belongs to the ScpB family. Homodimer. Homodimerization may be required to stabilize the binding of ScpA to the Smc head domains. Component of a cohesin-like complex composed of ScpA, ScpB and the Smc homodimer, in which ScpA and ScpB bind to the head domain of Smc. The presence of the three proteins is required for the association of the complex with DNA.

It is found in the cytoplasm. Its function is as follows. Participates in chromosomal partition during cell division. May act via the formation of a condensin-like complex containing Smc and ScpA that pull DNA away from mid-cell into both cell halves. This Listeria welshimeri serovar 6b (strain ATCC 35897 / DSM 20650 / CCUG 15529 / CIP 8149 / NCTC 11857 / SLCC 5334 / V8) protein is Segregation and condensation protein B.